A 142-amino-acid polypeptide reads, in one-letter code: Photosystem II extrinsic protein U (142 aa).

A signal peptide spans 1-29 (MKGLVRLLTVFSLLLGCWGWLGTTQIAQA).

This sequence belongs to the PsbU family. PSII is composed of 1 copy each of membrane proteins PsbA, PsbB, PsbC, PsbD, PsbE, PsbF, PsbH, PsbI, PsbJ, PsbK, PsbL, PsbM, PsbT, PsbX, PsbY, PsbZ, Psb30/Ycf12, peripheral proteins PsbO, CyanoQ (PsbQ), PsbU, PsbV and a large number of cofactors. It forms dimeric complexes.

Its subcellular location is the cellular thylakoid membrane. One of the extrinsic, lumenal subunits of photosystem II (PSII). PSII is a light-driven water plastoquinone oxidoreductase, using light energy to abstract electrons from H(2)O, generating a proton gradient subsequently used for ATP formation. The extrinsic proteins stabilize the structure of photosystem II oxygen-evolving complex (OEC), the ion environment of oxygen evolution and protect the OEC against heat-induced inactivation. In Nostoc sp. (strain PCC 7120 / SAG 25.82 / UTEX 2576), this protein is Photosystem II extrinsic protein U.